Reading from the N-terminus, the 96-residue chain is Putative pterin-4-alpha-carbinolamine dehydratase (96 aa).

It belongs to the pterin-4-alpha-carbinolamine dehydratase family.

It catalyses the reaction (4aS,6R)-4a-hydroxy-L-erythro-5,6,7,8-tetrahydrobiopterin = (6R)-L-erythro-6,7-dihydrobiopterin + H2O. This is Putative pterin-4-alpha-carbinolamine dehydratase from Rhodospirillum rubrum (strain ATCC 11170 / ATH 1.1.1 / DSM 467 / LMG 4362 / NCIMB 8255 / S1).